The primary structure comprises 201 residues: Small ribosomal subunit protein uS4 (201 aa).

The disordered stretch occupies residues 1–42 (MARYTGPVTRKSRRLGTDLVGGDQSFEKRPYPPGQHGRARIK). An S4 RNA-binding domain is found at 91–157 (SRLDNVVYRA…VPFQIARETA (67 aa)).

Belongs to the universal ribosomal protein uS4 family. In terms of assembly, part of the 30S ribosomal subunit. Contacts protein S5. The interaction surface between S4 and S5 is involved in control of translational fidelity.

Functionally, one of the primary rRNA binding proteins, it binds directly to 16S rRNA where it nucleates assembly of the body of the 30S subunit. In terms of biological role, with S5 and S12 plays an important role in translational accuracy. The chain is Small ribosomal subunit protein uS4 from Mycobacterium ulcerans (strain Agy99).